Consider the following 217-residue polypeptide: Ras-related protein Rab11B (217 aa).

GTP is bound at residue 21 to 28; that stretch reads GDSGVGKS. The Effector region motif lies at 43 to 51; sequence SKSTIGVEF. Residues 69–73 and 127–130 each bind GTP; these read DTAGQ and NKAD. 2 S-geranylgeranyl cysteine lipidation sites follow: Cys-214 and Cys-215.

It belongs to the small GTPase superfamily. Rab family.

It localises to the cell membrane. This Nicotiana tabacum (Common tobacco) protein is Ras-related protein Rab11B (RAB11B).